Here is a 228-residue protein sequence, read N- to C-terminus: Putative NAC domain-containing protein 61 (228 aa).

Positions 5-156 constitute an NAC domain; the sequence is LSVGFRFYPT…KSGSSRAFDR (152 aa). Disordered stretches follow at residues 77–96 and 166–197; these read ARGGRPSRTTGSGYWKATGS and RNLPSNGVETSSRATISTSPETSHSGGNQVDL. Over residues 80-89 the composition is skewed to low complexity; that stretch reads GRPSRTTGSG. The span at 168-193 shows a compositional bias: polar residues; the sequence is LPSNGVETSSRATISTSPETSHSGGN.

The protein resides in the nucleus. The sequence is that of Putative NAC domain-containing protein 61 (NAC061) from Arabidopsis thaliana (Mouse-ear cress).